Here is a 156-residue protein sequence, read N- to C-terminus: SsrA-binding protein (156 aa).

This sequence belongs to the SmpB family.

Its subcellular location is the cytoplasm. Its function is as follows. Required for rescue of stalled ribosomes mediated by trans-translation. Binds to transfer-messenger RNA (tmRNA), required for stable association of tmRNA with ribosomes. tmRNA and SmpB together mimic tRNA shape, replacing the anticodon stem-loop with SmpB. tmRNA is encoded by the ssrA gene; the 2 termini fold to resemble tRNA(Ala) and it encodes a 'tag peptide', a short internal open reading frame. During trans-translation Ala-aminoacylated tmRNA acts like a tRNA, entering the A-site of stalled ribosomes, displacing the stalled mRNA. The ribosome then switches to translate the ORF on the tmRNA; the nascent peptide is terminated with the 'tag peptide' encoded by the tmRNA and targeted for degradation. The ribosome is freed to recommence translation, which seems to be the essential function of trans-translation. The protein is SsrA-binding protein of Staphylococcus carnosus (strain TM300).